The following is a 595-amino-acid chain: TNF receptor-associated factor family protein DDB_G0272348 (595 aa).

The tract at residues 14–64 is disordered; that stretch reads SFTNNNSNNNNNNNNNSNSNNNNNNNNNNINNNNNHNNNNKNNSNNKNEIN. Residues 17-64 are compositionally biased toward low complexity; that stretch reads NNNSNNNNNNNNNSNSNNNNNNNNNNINNNNNHNNNNKNNSNNKNEIN. The RING-type; degenerate zinc finger occupies 87 to 134; that stretch reads CTICSDLLVNSFHADKFKAVQCKNGHYTTCLNCWEKHLEKKKNCIQCG. 2 consecutive TRAF-type zinc fingers follow at residues 189–253 and 254–311; these read EHLK…INKE and SHNA…SKLS. Residues 348–410 are a coiled coil; sequence LLNGQNKKIT…QQQQSQQQQQ (63 aa). Over residues 409–440 the composition is skewed to low complexity; it reads QQSQQQQQSQQSQQNNNSNSHFINNNNNNINN. Positions 409–450 are disordered; sequence QQSQQQQQSQQSQQNNNSNSHFINNNNNNINNVQMSDSPNGG. Residues 441 to 450 are compositionally biased toward polar residues; sequence VQMSDSPNGG. One can recognise an MATH domain in the interval 456-584; that stretch reads VYKNKWVISN…NDSITIEIEI (129 aa).

It belongs to the TNF receptor-associated factor family. A subfamily.

The protein resides in the cytoplasm. Probable adapter protein and signal transducer that links members of the tumor necrosis factor receptor family to different signaling pathways by association with the receptor cytoplasmic domain and kinases. The polypeptide is TNF receptor-associated factor family protein DDB_G0272348 (Dictyostelium discoideum (Social amoeba)).